Reading from the N-terminus, the 1704-residue chain is Arf-GAP with Rho-GAP domain, ANK repeat and PH domain-containing protein 2 (1704 aa).

The 65-residue stretch at 6-70 (EVNVDIKDFL…LKQLQIILSK (65 aa)) folds into the SAM domain. Position 77 is a phosphotyrosine (Tyr-77). The tract at residues 126–161 (NLEDSDASVERSQYPQSDDKLSPPKRDFPTAEEPHL) is disordered. Positions 142–160 (SDDKLSPPKRDFPTAEEPH) are enriched in basic and acidic residues. PH domains are found at residues 482–574 (KKVK…NALK) and 587–679 (TPEK…QSIA). The Arf-GAP domain occupies 676–811 (QSIAETLSDY…TLLASLTKEE (136 aa)). The C4-type zinc finger occupies 700–723 (CADCKAPDPDWASINLCVVICKKC). 2 PH domains span residues 878-1003 (DIHS…KHFV) and 1014-1114 (DYDL…AGTD). The 182-residue stretch at 1116 to 1297 (NALQDQQLSK…DLINNYVEIF (182 aa)) folds into the Rho-GAP domain. The region spanning 1326–1420 (GDLLIEVYVE…AYLVVKRFLT (95 aa)) is the Ras-associating domain. In terms of domain architecture, PH 5 spans 1434–1537 (GSIKEGILKI…WMTSIFIAQH (104 aa)). Ser-1632 is modified (phosphoserine). Positions 1636-1675 (LEDTEPEAPLGQPKGHKGLKTLRKTEDRNSKATLDSDHKL) are disordered. Positions 1658 to 1675 (RKTEDRNSKATLDSDHKL) are enriched in basic and acidic residues.

As to expression, detected in brain, thymus, lymph node, thyroid, spinal cord, trachea, heart, skeletal muscle, spleen, kidney, liver, placenta, lung and peripheral blood leukocytes.

Its subcellular location is the cytoplasm. In terms of biological role, phosphatidylinositol 3,4,5-trisphosphate-dependent GTPase-activating protein that modulates actin cytoskeleton remodeling by regulating ARF and RHO family members. Is activated by phosphatidylinositol 3,4,5-trisphosphate (PtdIns(3,4,5)P3) binding. Can be activated by phosphatidylinositol 3,4-bisphosphate (PtdIns(3,4,5)P2) binding, albeit with lower efficiency. This is Arf-GAP with Rho-GAP domain, ANK repeat and PH domain-containing protein 2 (ARAP2) from Homo sapiens (Human).